We begin with the raw amino-acid sequence, 317 residues long: MVTVVNTLNRPRHPEKQNRPETEVLRKPDWIRVKAPGSAGWSNTAGIVRANGLHTVCEEAGCPNIGECWEKKHATFMIMGDTCTRACSFCNVRTGMPKALDLDEPQKVGEAVAKLGLSHVVITSVDRDDLTDGGAEHFARTIASIRKLSPGTTIEILTPDFLRKPGAIEVVVAARPDVFNHNLETVPGKYLTVRPGARYFHSLRLLQQVKELDPSIFTKSGIMVGLGEERNEVLQLMDDLRAAEVDFMTIGQYLQPTRKHHKVERFVTPDEFKAYETVAYAKGFLMVSSSPLTRSSHHAGDDFAKLRAAREAKLGRI.

A disordered region spans residues Met-1–Thr-22. A compositionally biased stretch (basic and acidic residues) spans Arg-12–Thr-22. [4Fe-4S] cluster is bound by residues Cys-57, Cys-62, Cys-68, Cys-83, Cys-87, Cys-90, and Ser-296. A Radical SAM core domain is found at Trp-69–Leu-285.

The protein belongs to the radical SAM superfamily. Lipoyl synthase family. [4Fe-4S] cluster serves as cofactor.

The protein resides in the cytoplasm. It carries out the reaction [[Fe-S] cluster scaffold protein carrying a second [4Fe-4S](2+) cluster] + N(6)-octanoyl-L-lysyl-[protein] + 2 oxidized [2Fe-2S]-[ferredoxin] + 2 S-adenosyl-L-methionine + 4 H(+) = [[Fe-S] cluster scaffold protein] + N(6)-[(R)-dihydrolipoyl]-L-lysyl-[protein] + 4 Fe(3+) + 2 hydrogen sulfide + 2 5'-deoxyadenosine + 2 L-methionine + 2 reduced [2Fe-2S]-[ferredoxin]. The protein operates within protein modification; protein lipoylation via endogenous pathway; protein N(6)-(lipoyl)lysine from octanoyl-[acyl-carrier-protein]: step 2/2. In terms of biological role, catalyzes the radical-mediated insertion of two sulfur atoms into the C-6 and C-8 positions of the octanoyl moiety bound to the lipoyl domains of lipoate-dependent enzymes, thereby converting the octanoylated domains into lipoylated derivatives. The polypeptide is Lipoyl synthase (Azorhizobium caulinodans (strain ATCC 43989 / DSM 5975 / JCM 20966 / LMG 6465 / NBRC 14845 / NCIMB 13405 / ORS 571)).